The following is a 299-amino-acid chain: rRNA methyltransferase (299 aa).

Residues 14–53 (AEKRSGRGRMAAARTTGAQSRKTAQRSGRSEADRRRRVHG) are disordered. A compositionally biased stretch (low complexity) spans 21–31 (GRMAAARTTGA). Residues N55, L57, G82, E103, D128, and N144 each coordinate S-adenosyl-L-methionine.

The protein belongs to the class I-like SAM-binding methyltransferase superfamily. rRNA adenine N(6)-methyltransferase family.

Functionally, probable RNA methylase. Confers resistance to carbomycin and several other macrolides, lincomycin and vernamycin B, but not to all macrolide-lincosamide-streptogramin B antibiotics. In Streptomyces thermotolerans, this protein is rRNA methyltransferase (carB).